Here is a 1431-residue protein sequence, read N- to C-terminus: Probable serine/threonine-protein kinase irlA (1431 aa).

Residues Met-1 to Thr-10 show a composition bias toward basic residues. Disordered regions lie at residues Met-1 to Glu-81 and Lys-736 to Lys-879. Over residues Asn-25–Ile-43 the composition is skewed to acidic residues. Low complexity predominate over residues Asn-46–Asn-67. Coiled-coil stretches lie at residues Asn-57–Glu-97 and Lys-715–Asn-759. The segment covering Gly-68 to Glu-81 has biased composition (basic and acidic residues). Positions Glu-738–Lys-749 are enriched in basic residues. The segment covering Ser-750–Lys-776 has biased composition (low complexity). Over residues Leu-777–Ile-791 the composition is skewed to polar residues. Over residues Thr-792–Thr-812 the composition is skewed to low complexity. Residues Thr-821 to Ser-838 show a composition bias toward polar residues. Residues Asn-854 to Asn-878 show a composition bias toward low complexity. The stretch at Asn-860 to Leu-971 forms a coiled coil. The Protein kinase domain maps to Arg-987–Phe-1261. ATP is bound by residues Ile-993 to Leu-1001 and Lys-1016. The active-site Proton acceptor is the Asp-1130. The 168-residue stretch at Thr-1264–Phe-1431 folds into the KEN domain.

This sequence belongs to the protein kinase superfamily. Ser/Thr protein kinase family.

The catalysed reaction is L-seryl-[protein] + ATP = O-phospho-L-seryl-[protein] + ADP + H(+). It carries out the reaction L-threonyl-[protein] + ATP = O-phospho-L-threonyl-[protein] + ADP + H(+). In Dictyostelium discoideum (Social amoeba), this protein is Probable serine/threonine-protein kinase irlA (irlA).